The chain runs to 190 residues: Imidazoleglycerol-phosphate dehydratase (190 aa).

This sequence belongs to the imidazoleglycerol-phosphate dehydratase family.

It localises to the cytoplasm. The enzyme catalyses D-erythro-1-(imidazol-4-yl)glycerol 3-phosphate = 3-(imidazol-4-yl)-2-oxopropyl phosphate + H2O. The protein operates within amino-acid biosynthesis; L-histidine biosynthesis; L-histidine from 5-phospho-alpha-D-ribose 1-diphosphate: step 6/9. The chain is Imidazoleglycerol-phosphate dehydratase from Sulfurimonas denitrificans (strain ATCC 33889 / DSM 1251) (Thiomicrospira denitrificans (strain ATCC 33889 / DSM 1251)).